We begin with the raw amino-acid sequence, 290 residues long: Plasma membrane ascorbate-dependent reductase CYBRD1 (290 aa).

Topologically, residues 1–7 (MAMEGYR) are cytoplasmic. The helical transmembrane segment at 8–32 (GFLGLLVSALLVGFLSVIFVLIWVL) threads the bilayer. The region spanning 15–220 (SALLVGFLSV…FGALIFWIVT (206 aa)) is the Cytochrome b561 domain. Topologically, residues 33-47 (HFREGLGWNGSGLEF) are extracellular. The chain crosses the membrane as a helical span at residues 48-69 (NWHPVLAVTGFVFIQGIAIIVY). 3 residues coordinate heme b: H50, R70, and K79. The Cytoplasmic segment spans residues 70 to 78 (RLPWTWKCS). The L-ascorbate site is built by K79 and K83. Residues 79 to 105 (KLLMKSIHAGLNAVAAILAIISVVAVF) form a helical membrane-spanning segment. H86 is a heme b binding site. Topologically, residues 106-118 (EYHNVQKVPHMYS) are extracellular. H108 provides a ligand contact to Fe(3+). Heme b-binding positions include 115–118 (HMYS) and H120. The chain crosses the membrane as a helical span at residues 119–144 (LHSWVGLTALILYIQQLVVGFFVFLL). At 145-151 (PWAPPSL) the chain is on the cytoplasmic side. L-ascorbate is bound at residue R152. The helical transmembrane segment at 152–179 (RAIVMPIHVYSGLLLFGTVIATVLMGVT) threads the bilayer. Heme b contacts are provided by H159 and E180. At 180–197 (EKLFFVLKHPSYHSFPPE) the chain is on the extracellular side. The chain crosses the membrane as a helical span at residues 198–222 (GVFTNTLGLLILVFGALIFWIVTRP). Residues 223 to 290 (QWKRPREPGS…LADSGQRSTM (68 aa)) are Cytoplasmic-facing. K225 serves as a coordination point for heme b. A Phosphoserine modification is found at S232. The tract at residues 257–290 (SMDAADPADAESSSEGAARKRTLGLADSGQRSTM) is disordered. Residues 260–272 (AADPADAESSSEG) are compositionally biased toward low complexity. Position 289 is a phosphothreonine (T289).

As to quaternary structure, homodimer. The cofactor is heme b. Highly expressed in the brush-border membrane of duodenal enterocytes (at protein level). Also expressed in liver and spleen.

Its subcellular location is the cell membrane. It is found in the apical cell membrane. It carries out the reaction Fe(3+)(out) + L-ascorbate(in) = monodehydro-L-ascorbate radical(in) + Fe(2+)(out) + H(+). The catalysed reaction is Cu(2+)(out) + L-ascorbate(in) = Cu(+)(out) + monodehydro-L-ascorbate radical(in) + H(+). The enzyme catalyses monodehydro-L-ascorbate radical(out) + L-ascorbate(in) = monodehydro-L-ascorbate radical(in) + L-ascorbate(out). Plasma membrane reductase that uses cytoplasmic ascorbate as an electron donor to reduce extracellular Fe(3+) into Fe(2+). Probably functions in dietary iron absorption at the brush border of duodenal enterocytes by producing Fe(2+), the divalent form of iron that can be transported into enterocytes. It is also able to reduce extracellular monodehydro-L-ascorbate and may be involved in extracellular ascorbate regeneration by erythrocytes in blood. May also act as a ferrireductase in airway epithelial cells. May also function as a cupric transmembrane reductase. The protein is Plasma membrane ascorbate-dependent reductase CYBRD1 of Mus musculus (Mouse).